The primary structure comprises 274 residues: Dermonecrotic toxin SdSicTox-betaIIB1biv (274 aa).

Residue His-5 is part of the active site. Mg(2+) is bound by residues Glu-25 and Asp-27. The active-site Nucleophile is His-41. 2 cysteine pairs are disulfide-bonded: Cys-45–Cys-51 and Cys-47–Cys-190. Asp-85 serves as a coordination point for Mg(2+).

The protein belongs to the arthropod phospholipase D family. Class II subfamily. It depends on Mg(2+) as a cofactor. In terms of tissue distribution, expressed by the venom gland.

The protein localises to the secreted. The enzyme catalyses an N-(acyl)-sphingosylphosphocholine = an N-(acyl)-sphingosyl-1,3-cyclic phosphate + choline. The catalysed reaction is an N-(acyl)-sphingosylphosphoethanolamine = an N-(acyl)-sphingosyl-1,3-cyclic phosphate + ethanolamine. It catalyses the reaction a 1-acyl-sn-glycero-3-phosphocholine = a 1-acyl-sn-glycero-2,3-cyclic phosphate + choline. It carries out the reaction a 1-acyl-sn-glycero-3-phosphoethanolamine = a 1-acyl-sn-glycero-2,3-cyclic phosphate + ethanolamine. Its function is as follows. Dermonecrotic toxins cleave the phosphodiester linkage between the phosphate and headgroup of certain phospholipids (sphingolipid and lysolipid substrates), forming an alcohol (often choline) and a cyclic phosphate. This toxin acts on sphingomyelin (SM). It may also act on ceramide phosphoethanolamine (CPE), lysophosphatidylcholine (LPC) and lysophosphatidylethanolamine (LPE), but not on lysophosphatidylserine (LPS), and lysophosphatidylglycerol (LPG). It acts by transphosphatidylation, releasing exclusively cyclic phosphate products as second products. Induces dermonecrosis, hemolysis, increased vascular permeability, edema, inflammatory response, and platelet aggregation. This is Dermonecrotic toxin SdSicTox-betaIIB1biv from Sicarius cf. damarensis (strain GJB-2008) (Six-eyed sand spider).